We begin with the raw amino-acid sequence, 89 residues long: Small ribosomal subunit protein uS19 (89 aa).

The protein belongs to the universal ribosomal protein uS19 family.

Functionally, protein S19 forms a complex with S13 that binds strongly to the 16S ribosomal RNA. The polypeptide is Small ribosomal subunit protein uS19 (Rhodopirellula baltica (strain DSM 10527 / NCIMB 13988 / SH1)).